The sequence spans 350 residues: UDP-N-acetylenolpyruvoylglucosamine reductase (350 aa).

The region spanning 24-195 is the FAD-binding PCMH-type domain; it reads HVEATARWLL…VAVEFNLPLL (172 aa). The active site involves Arg172. The active-site Proton donor is the Ser245. Residue Glu342 is part of the active site.

It belongs to the MurB family. The cofactor is FAD.

The protein localises to the cytoplasm. It catalyses the reaction UDP-N-acetyl-alpha-D-muramate + NADP(+) = UDP-N-acetyl-3-O-(1-carboxyvinyl)-alpha-D-glucosamine + NADPH + H(+). The protein operates within cell wall biogenesis; peptidoglycan biosynthesis. Functionally, cell wall formation. This chain is UDP-N-acetylenolpyruvoylglucosamine reductase, found in Xanthomonas oryzae pv. oryzae (strain PXO99A).